We begin with the raw amino-acid sequence, 161 residues long: Putative HTH-type transcriptional regulator MT1325 (161 aa).

In terms of domain architecture, HTH rrf2-type spans 2-132 (RMSAKAEYAV…EETTLADVAG (131 aa)).

The protein is Putative HTH-type transcriptional regulator MT1325 of Mycobacterium tuberculosis (strain CDC 1551 / Oshkosh).